The following is a 181-amino-acid chain: Ribonuclease HII (181 aa).

Residues Met-1–Ile-181 form the RNase H type-2 domain. A divalent metal cation contacts are provided by Asp-6, Glu-7, and Asp-98.

Belongs to the RNase HII family. Mn(2+) serves as cofactor. Mg(2+) is required as a cofactor.

It is found in the cytoplasm. It catalyses the reaction Endonucleolytic cleavage to 5'-phosphomonoester.. Functionally, endonuclease that specifically degrades the RNA of RNA-DNA hybrids. The polypeptide is Ribonuclease HII (Borreliella burgdorferi (strain ZS7) (Borrelia burgdorferi)).